The sequence spans 860 residues: Leucine--tRNA ligase (860 aa).

A 'HIGH' region motif is present at residues 42-52 (PYPSGRLHMGH). Positions 619 to 623 (KMSKS) match the 'KMSKS' region motif. ATP is bound at residue Lys-622.

Belongs to the class-I aminoacyl-tRNA synthetase family.

The protein resides in the cytoplasm. It catalyses the reaction tRNA(Leu) + L-leucine + ATP = L-leucyl-tRNA(Leu) + AMP + diphosphate. This is Leucine--tRNA ligase from Salmonella paratyphi A (strain ATCC 9150 / SARB42).